Here is a 367-residue protein sequence, read N- to C-terminus: 3-isopropylmalate dehydrogenase (367 aa).

77 to 90 lines the NAD(+) pocket; that stretch reads GPKWDAVPYEVRPE. R97, R107, R135, and D226 together coordinate substrate. Residues D226, D250, and D254 each coordinate Mg(2+). An NAD(+)-binding site is contributed by 290–302; that stretch reads GSAPDIAGKGIAN.

It belongs to the isocitrate and isopropylmalate dehydrogenases family. LeuB type 1 subfamily. Homodimer. It depends on Mg(2+) as a cofactor. Mn(2+) is required as a cofactor.

Its subcellular location is the cytoplasm. The catalysed reaction is (2R,3S)-3-isopropylmalate + NAD(+) = 4-methyl-2-oxopentanoate + CO2 + NADH. It participates in amino-acid biosynthesis; L-leucine biosynthesis; L-leucine from 3-methyl-2-oxobutanoate: step 3/4. In terms of biological role, catalyzes the oxidation of 3-carboxy-2-hydroxy-4-methylpentanoate (3-isopropylmalate) to 3-carboxy-4-methyl-2-oxopentanoate. The product decarboxylates to 4-methyl-2 oxopentanoate. The polypeptide is 3-isopropylmalate dehydrogenase (Mesorhizobium japonicum (strain LMG 29417 / CECT 9101 / MAFF 303099) (Mesorhizobium loti (strain MAFF 303099))).